The sequence spans 65 residues: Large ribosomal subunit protein bL35 (65 aa).

Belongs to the bacterial ribosomal protein bL35 family.

This chain is Large ribosomal subunit protein bL35, found in Rhodospirillum rubrum (strain ATCC 11170 / ATH 1.1.1 / DSM 467 / LMG 4362 / NCIMB 8255 / S1).